Here is a 620-residue protein sequence, read N- to C-terminus: Chaperone protein HscA homolog (620 aa).

It belongs to the heat shock protein 70 family.

Functionally, chaperone involved in the maturation of iron-sulfur cluster-containing proteins. Has a low intrinsic ATPase activity which is markedly stimulated by HscB. The sequence is that of Chaperone protein HscA homolog from Pseudomonas syringae pv. syringae (strain B728a).